The primary structure comprises 263 residues: Chromosomal replication initiator protein DnaA (263 aa).

Position 1 (glutamate 1) is a region of interest, domain I, interacts with DnaA modulators. Position 1 (glutamate 1) is a region of interest, domain II. The interval 1–179 is domain III, AAA+ region; that stretch reads ESGMGKTHLL…GSVSRLNFWS (179 aa). Residues glycine 3, glycine 5, lysine 6, and threonine 7 each contribute to the ATP site. The interval 180–263 is domain IV, binds dsDNA; it reads QQNPEEKIIT…HTLAQIGEEF (84 aa).

It belongs to the DnaA family. In terms of assembly, oligomerizes as a right-handed, spiral filament on DNA at oriC.

It localises to the cytoplasm. In terms of biological role, plays an essential role in the initiation and regulation of chromosomal replication. ATP-DnaA binds to the origin of replication (oriC) to initiate formation of the DNA replication initiation complex once per cell cycle. Binds the DnaA box (a 9 base pair repeat at the origin) and separates the double-stranded (ds)DNA. Forms a right-handed helical filament on oriC DNA; dsDNA binds to the exterior of the filament while single-stranded (ss)DNA is stabiized in the filament's interior. The ATP-DnaA-oriC complex binds and stabilizes one strand of the AT-rich DNA unwinding element (DUE), permitting loading of DNA polymerase. After initiation quickly degrades to an ADP-DnaA complex that is not apt for DNA replication. Binds acidic phospholipids. The chain is Chromosomal replication initiator protein DnaA from Mycoplasma mycoides.